The chain runs to 473 residues: Photosystem II CP43 reaction center protein (473 aa).

Residues 1–14 (MKTLYSLRRFYPVE) constitute a propeptide that is removed on maturation. Residue Thr-15 is modified to N-acetylthreonine. Position 15 is a phosphothreonine (Thr-15). 5 helical membrane passes run 69–93 (LFEV…PHLA), 134–155 (LLGP…KDRN), 178–200 (KALY…RKIT), 255–275 (KPFA…LSYS), and 291–312 (WFNN…ASQA). Residue Glu-367 participates in [CaMn4O5] cluster binding. The chain crosses the membrane as a helical span at residues 447-471 (RARAAAAGFEKGIDRDFEPVLFMTP).

This sequence belongs to the PsbB/PsbC family. PsbC subfamily. In terms of assembly, PSII is composed of 1 copy each of membrane proteins PsbA, PsbB, PsbC, PsbD, PsbE, PsbF, PsbH, PsbI, PsbJ, PsbK, PsbL, PsbM, PsbT, PsbX, PsbY, PsbZ, Psb30/Ycf12, at least 3 peripheral proteins of the oxygen-evolving complex and a large number of cofactors. It forms dimeric complexes. It depends on Binds multiple chlorophylls and provides some of the ligands for the Ca-4Mn-5O cluster of the oxygen-evolving complex. It may also provide a ligand for a Cl- that is required for oxygen evolution. PSII binds additional chlorophylls, carotenoids and specific lipids. as a cofactor.

The protein resides in the plastid. It is found in the chloroplast thylakoid membrane. In terms of biological role, one of the components of the core complex of photosystem II (PSII). It binds chlorophyll and helps catalyze the primary light-induced photochemical processes of PSII. PSII is a light-driven water:plastoquinone oxidoreductase, using light energy to abstract electrons from H(2)O, generating O(2) and a proton gradient subsequently used for ATP formation. This chain is Photosystem II CP43 reaction center protein, found in Cucumis sativus (Cucumber).